Consider the following 151-residue polypeptide: Nucleoside diphosphate kinase (151 aa).

ATP is bound by residues K11, F59, R87, T93, R104, and N114. The active-site Pros-phosphohistidine intermediate is the H117.

The protein belongs to the NDK family. Homotetramer. Mg(2+) serves as cofactor.

The protein resides in the cytoplasm. It carries out the reaction a 2'-deoxyribonucleoside 5'-diphosphate + ATP = a 2'-deoxyribonucleoside 5'-triphosphate + ADP. The catalysed reaction is a ribonucleoside 5'-diphosphate + ATP = a ribonucleoside 5'-triphosphate + ADP. In terms of biological role, major role in the synthesis of nucleoside triphosphates other than ATP. The ATP gamma phosphate is transferred to the NDP beta phosphate via a ping-pong mechanism, using a phosphorylated active-site intermediate. In Prochlorococcus marinus (strain NATL2A), this protein is Nucleoside diphosphate kinase.